We begin with the raw amino-acid sequence, 420 residues long: Protein disulfide isomerase Creld1 (420 aa).

A signal peptide spans 1–29 (MAPQPLRGLVPFLLWCLSLFLSLPGPVWL). Over 30–362 (QPSPPPHSAP…GFFAEMTEDE (333 aa)) the chain is Extracellular. The CXXC motif lies at 46–49 (CHTC). 4 disulfide bridges follow: Cys-46-Cys-49, Cys-155-Cys-169, Cys-163-Cys-181, and Cys-183-Cys-192. Residues 153-193 (LPCPGGTERPCGGYGQCEGEGTRGGSGHCDCQAGYGGEACG) form the EGF-like 1 domain. A glycan (N-linked (GlcNAc...) asparagine) is linked at Asn-205. FU repeat units lie at residues 208 to 255 (HLVC…EQAT) and 268 to 315 (SYEC…VVCP). Residues 278–281 (CLGC) carry the CXXC motif. 4 disulfides stabilise this stretch: Cys-278/Cys-281, Cys-309/Cys-321, Cys-314/Cys-330, and Cys-332/Cys-343. Residues 305-342 (DVDECETVVCPGENEQCENTEGSYRCVCAEGFRQEDGI) enclose the EGF-like 2; calcium-binding domain. A helical membrane pass occupies residues 363–383 (MVVLQQMFFGVIICALATLAA). Position 384 (Lys-384) is a topological domain, cytoplasmic. A helical membrane pass occupies residues 385-405 (GDLVFTAIFIGAVAAMTGYWL). Residues 406 to 420 (SERSDRVLEGFIKGR) are Extracellular-facing.

The protein belongs to the CRELD family.

It localises to the membrane. It catalyses the reaction Catalyzes the rearrangement of -S-S- bonds in proteins.. Protein disulfide isomerase. Promotes the localization of acetylcholine receptors (AChRs) to the plasma membrane. The chain is Protein disulfide isomerase Creld1 (Creld1) from Rattus norvegicus (Rat).